A 93-amino-acid chain; its full sequence is Alpha-defensin 7 (93 aa).

The N-terminal stretch at M1–A19 is a signal peptide. The propeptide occupies D20 to S58. The segment at I22–E56 is disordered. 3 disulfide bridges follow: C64-C92, C66-C81, and C71-C91.

This sequence belongs to the alpha-defensin family. In terms of tissue distribution, paneth cells of the small bowel.

It localises to the secreted. In terms of biological role, probably contributes to the antimicrobial barrier function of the small bowel mucosa. In Mus musculus (Mouse), this protein is Alpha-defensin 7 (Defa7).